We begin with the raw amino-acid sequence, 553 residues long: uncharacterized protein (553 aa).

Residues 1–31 form the signal peptide; sequence MEDIMTSLLVATSRVVVTISLAYVPVKSAFA. Catalysis depends on Ser207, which acts as the Acyl-ester intermediate. A disulfide bridge links Cys275 with Cys292. Residues Asp276, Asp279, Val281, Asp283, and Leu285 each coordinate Ca(2+). Catalysis depends on charge relay system residues Asp444 and His482. The cysteines at positions 528 and 550 are disulfide-linked.

It belongs to the tannase family.

This is an uncharacterized protein from Agrobacterium fabrum (strain C58 / ATCC 33970) (Agrobacterium tumefaciens (strain C58)).